The chain runs to 147 residues: uncharacterized protein (147 aa).

A run of 2 helical transmembrane segments spans residues W42–P62 and L64–F84.

Its subcellular location is the cell membrane. This is an uncharacterized protein from Bacillus subtilis (strain 168).